Here is a 313-residue protein sequence, read N- to C-terminus: Pyrimidine-specific ribonucleoside hydrolase RihB (313 aa).

Residue aspartate 11 is the Proton acceptor of the active site. 3 residues coordinate Ca(2+): aspartate 11, aspartate 16, and valine 124. Glutamine 227 and histidine 239 together coordinate substrate. Aspartate 240 lines the Ca(2+) pocket.

The protein belongs to the IUNH family. RihB subfamily. In terms of assembly, homotetramer. Ca(2+) is required as a cofactor.

It catalyses the reaction a pyrimidine ribonucleoside + H2O = a pyrimidine nucleobase + D-ribose. Its function is as follows. Hydrolyzes cytidine or uridine to ribose and cytosine or uracil, respectively. Has a clear preference for cytidine over uridine. Strictly specific for ribonucleosides. This Escherichia coli (strain SMS-3-5 / SECEC) protein is Pyrimidine-specific ribonucleoside hydrolase RihB.